A 421-amino-acid polypeptide reads, in one-letter code: MLCGRLRHTMNSTTCFFSHRTVLIGIVGSLIIAVSVVGNVLVCLAIFTEPILSHSKSKFFIVSLAVADLLLALLVMTFALVNSLYGYWLFGETFCFIWMSADVMCETASIFSICVISYNRLKQVQKPLQYEEFMTTTRALLIIASLWICSFVVSFVPFFLEWHELSMEEIKTIFKDLISDKVKTSDAHTFSFALEQTLGDNRTSNPKPECLFDVHFIYSVIYSLFCFYIPCTLMLRNYLRLFLIAKKHHVRIKNLHRLHRNQGTQGSKAARTLTIITGTFLACWLPFFIINPIEAVDEHLIPLECFMVTIWLGYFNSCVNPIIYGTSNSKFRAAFQRLLRCRSVKSTVSSISPVASVYRAFSWIRPSLLDGPPSAVCDTGQDENRKGGGCVTTIPTESHVIISEEEIRANVMLSESDTVFS.

The Extracellular segment spans residues 1–21; that stretch reads MLCGRLRHTMNSTTCFFSHRT. An N-linked (GlcNAc...) asparagine glycan is attached at Asn-11. A helical membrane pass occupies residues 22–42; sequence VLIGIVGSLIIAVSVVGNVLV. Topologically, residues 43–59 are cytoplasmic; sequence CLAIFTEPILSHSKSKF. Residues 60 to 79 traverse the membrane as a helical segment; the sequence is FIVSLAVADLLLALLVMTFA. Over 80-95 the chain is Extracellular; the sequence is LVNSLYGYWLFGETFC. Cysteines 95 and 210 form a disulfide. A helical transmembrane segment spans residues 96–118; that stretch reads FIWMSADVMCETASIFSICVISY. Over 119 to 138 the chain is Cytoplasmic; it reads NRLKQVQKPLQYEEFMTTTR. The helical transmembrane segment at 139 to 160 threads the bilayer; the sequence is ALLIIASLWICSFVVSFVPFFL. The Extracellular segment spans residues 161–213; it reads EWHELSMEEIKTIFKDLISDKVKTSDAHTFSFALEQTLGDNRTSNPKPECLFD. A helical membrane pass occupies residues 214-234; it reads VHFIYSVIYSLFCFYIPCTLM. Topologically, residues 235–274 are cytoplasmic; it reads LRNYLRLFLIAKKHHVRIKNLHRLHRNQGTQGSKAARTLT. Residues 275–295 form a helical membrane-spanning segment; that stretch reads IITGTFLACWLPFFIINPIEA. The Extracellular segment spans residues 296 to 304; sequence VDEHLIPLE. The chain crosses the membrane as a helical span at residues 305–325; it reads CFMVTIWLGYFNSCVNPIIYG. Topologically, residues 326-421 are cytoplasmic; sequence TSNSKFRAAF…MLSESDTVFS (96 aa).

It belongs to the G-protein coupled receptor 1 family. Central nervous system.

The protein localises to the cell membrane. Its function is as follows. This is one of the several different receptors for 5-hydroxytryptamine (serotonin). 5-HT plays important roles in various behavioral and physiological processes in aplysia. These include feeding, locomotion, circadian rhythm, learning and memory, synaptic plasticity, and synaptic growth. This receptor is mediated by G proteins that stimulate phospholipase C. This Aplysia californica (California sea hare) protein is 5-hydroxytryptamine receptor 2 (5HTB2).